The chain runs to 342 residues: Glyceraldehyde-3-phosphate dehydrogenase (342 aa).

NAD(+)-binding positions include R12–I13, D34, K78, and T120. Residues S151–T153 and T182 each bind D-glyceraldehyde 3-phosphate. Residue C152 is the Nucleophile of the active site. N183 lines the NAD(+) pocket. D-glyceraldehyde 3-phosphate-binding positions include R197, T210–G211, and R233. N322 is a binding site for NAD(+).

Belongs to the glyceraldehyde-3-phosphate dehydrogenase family. As to quaternary structure, homotetramer.

It localises to the cytoplasm. It carries out the reaction D-glyceraldehyde 3-phosphate + phosphate + NAD(+) = (2R)-3-phospho-glyceroyl phosphate + NADH + H(+). It functions in the pathway carbohydrate degradation; glycolysis; pyruvate from D-glyceraldehyde 3-phosphate: step 1/5. Functionally, catalyzes the oxidative phosphorylation of glyceraldehyde 3-phosphate (G3P) to 1,3-bisphosphoglycerate (BPG) using the cofactor NAD. The first reaction step involves the formation of a hemiacetal intermediate between G3P and a cysteine residue, and this hemiacetal intermediate is then oxidized to a thioester, with concomitant reduction of NAD to NADH. The reduced NADH is then exchanged with the second NAD, and the thioester is attacked by a nucleophilic inorganic phosphate to produce BPG. This Aquifex aeolicus (strain VF5) protein is Glyceraldehyde-3-phosphate dehydrogenase (gap).